The following is a 302-amino-acid chain: Acetylglutamate kinase (302 aa).

Residues 68 to 69 (GG), R90, and N194 contribute to the substrate site.

The protein belongs to the acetylglutamate kinase family. ArgB subfamily.

The protein localises to the cytoplasm. It carries out the reaction N-acetyl-L-glutamate + ATP = N-acetyl-L-glutamyl 5-phosphate + ADP. The protein operates within amino-acid biosynthesis; L-arginine biosynthesis; N(2)-acetyl-L-ornithine from L-glutamate: step 2/4. Its function is as follows. Catalyzes the ATP-dependent phosphorylation of N-acetyl-L-glutamate. This Acinetobacter baumannii (strain AB307-0294) protein is Acetylglutamate kinase.